Here is a 308-residue protein sequence, read N- to C-terminus: C-4 methylsterol oxidase (308 aa).

The helical transmembrane segment at 56–76 (LLFFLTHEIFYFGRCLPWAII) threads the bilayer. The Fatty acid hydroxylase domain occupies 145–282 (WAVFFVLEDT…FRWWDFILDT (138 aa)). The Histidine box-1 motif lies at 160–164 (HRGLH). Residues 173 to 177 (HKQHH) carry the Histidine box-2 motif. Positions 257 to 263 (HHDEHHH) match the Histidine box-3 motif.

It belongs to the sterol desaturase family. It depends on Fe cation as a cofactor.

Its subcellular location is the endoplasmic reticulum membrane. It carries out the reaction 4,4-dimethyl-5alpha-cholest-7-en-3beta-ol + 6 Fe(II)-[cytochrome b5] + 3 O2 + 5 H(+) = 4alpha-carboxy-4beta-methyl-5alpha-cholest-7-ene-3beta-ol + 6 Fe(III)-[cytochrome b5] + 4 H2O. The protein operates within steroid biosynthesis; zymosterol biosynthesis; zymosterol from lanosterol: step 3/6. Its function is as follows. C-4 methylsterol oxidase; part of the third module of ergosterol biosynthesis pathway that includes the late steps of the pathway. ERG25 is a catalytic component of the C-4 demethylation complex that catalyzes the conversion of 4,4-dimethylfecosterol into fecosterol via 4-methylfecosterol. Catalyzes the three-step monooxygenation required for the demethylation of 4,4-dimethyl and 4alpha-methylsterols. The third module or late pathway involves the ergosterol synthesis itself through consecutive reactions that mainly occur in the endoplasmic reticulum (ER) membrane. Firstly, the squalene synthase ERG9 catalyzes the condensation of 2 farnesyl pyrophosphate moieties to form squalene, which is the precursor of all steroids. Squalene synthase is crucial for balancing the incorporation of farnesyl diphosphate (FPP) into sterol and nonsterol isoprene synthesis. Secondly, the squalene epoxidase ERG1 catalyzes the stereospecific oxidation of squalene to (S)-2,3-epoxysqualene, which is considered to be a rate-limiting enzyme in steroid biosynthesis. Then, the lanosterol synthase ERG7 catalyzes the cyclization of (S)-2,3 oxidosqualene to lanosterol, a reaction that forms the sterol core. In the next steps, lanosterol is transformed to zymosterol through a complex process involving various demethylation, reduction and desaturation reactions. The lanosterol 14-alpha-demethylase ERG11 (also known as CYP51) catalyzes C14-demethylation of lanosterol to produce 4,4'-dimethyl cholesta-8,14,24-triene-3-beta-ol, which is critical for ergosterol biosynthesis. The C-14 reductase ERG24 reduces the C14=C15 double bond of 4,4-dimethyl-cholesta-8,14,24-trienol to produce 4,4-dimethyl-cholesta-8,24-dienol. 4,4-dimethyl-cholesta-8,24-dienol is substrate of the C-4 demethylation complex ERG25-ERG26-ERG27 in which ERG25 catalyzes the three-step monooxygenation required for the demethylation of 4,4-dimethyl and 4alpha-methylsterols, ERG26 catalyzes the oxidative decarboxylation that results in a reduction of the 3-beta-hydroxy group at the C-3 carbon to an oxo group, and ERG27 is responsible for the reduction of the keto group on the C-3. ERG28 has a role as a scaffold to help anchor ERG25, ERG26 and ERG27 to the endoplasmic reticulum and ERG29 regulates the activity of the iron-containing C4-methylsterol oxidase ERG25. Then, the sterol 24-C-methyltransferase ERG6 catalyzes the methyl transfer from S-adenosyl-methionine to the C-24 of zymosterol to form fecosterol. The C-8 sterol isomerase ERG2 catalyzes the reaction which results in unsaturation at C-7 in the B ring of sterols and thus converts fecosterol to episterol. The sterol-C5-desaturase ERG3 then catalyzes the introduction of a C-5 double bond in the B ring to produce 5-dehydroepisterol. The C-22 sterol desaturase ERG5 further converts 5-dehydroepisterol into ergosta-5,7,22,24(28)-tetraen-3beta-ol by forming the C-22(23) double bond in the sterol side chain. Finally, ergosta-5,7,22,24(28)-tetraen-3beta-ol is substrate of the C-24(28) sterol reductase ERG4 to produce ergosterol. This chain is C-4 methylsterol oxidase, found in Candida albicans (strain SC5314 / ATCC MYA-2876) (Yeast).